The following is a 70-amino-acid chain: uncharacterized protein (70 aa).

The helical transmembrane segment at 50-70 threads the bilayer; it reads FYLLVFFIILWVSREAFFYLI.

It belongs to the M.jannaschii MJ0023/MJ0349/MJ1072/MJ1074/MJ1107/MJECL16 family.

It is found in the membrane. This is an uncharacterized protein from Methanocaldococcus jannaschii (strain ATCC 43067 / DSM 2661 / JAL-1 / JCM 10045 / NBRC 100440) (Methanococcus jannaschii).